A 188-amino-acid polypeptide reads, in one-letter code: Elongation factor P (188 aa).

The protein belongs to the elongation factor P family.

The protein resides in the cytoplasm. It functions in the pathway protein biosynthesis; polypeptide chain elongation. Its function is as follows. Involved in peptide bond synthesis. Stimulates efficient translation and peptide-bond synthesis on native or reconstituted 70S ribosomes in vitro. Probably functions indirectly by altering the affinity of the ribosome for aminoacyl-tRNA, thus increasing their reactivity as acceptors for peptidyl transferase. The sequence is that of Elongation factor P from Chloroherpeton thalassium (strain ATCC 35110 / GB-78).